Consider the following 433-residue polypeptide: Enolase (433 aa).

Gln-167 is a (2R)-2-phosphoglycerate binding site. Catalysis depends on Glu-209, which acts as the Proton donor. Asp-246, Glu-291, and Asp-318 together coordinate Mg(2+). Residues Lys-343, Arg-372, Ser-373, and Lys-394 each contribute to the (2R)-2-phosphoglycerate site. Lys-343 functions as the Proton acceptor in the catalytic mechanism.

Belongs to the enolase family. In terms of assembly, component of the RNA degradosome, a multiprotein complex involved in RNA processing and mRNA degradation. Mg(2+) is required as a cofactor.

It is found in the cytoplasm. The protein localises to the secreted. It localises to the cell surface. The enzyme catalyses (2R)-2-phosphoglycerate = phosphoenolpyruvate + H2O. The protein operates within carbohydrate degradation; glycolysis; pyruvate from D-glyceraldehyde 3-phosphate: step 4/5. Catalyzes the reversible conversion of 2-phosphoglycerate (2-PG) into phosphoenolpyruvate (PEP). It is essential for the degradation of carbohydrates via glycolysis. In Aeromonas hydrophila subsp. hydrophila (strain ATCC 7966 / DSM 30187 / BCRC 13018 / CCUG 14551 / JCM 1027 / KCTC 2358 / NCIMB 9240 / NCTC 8049), this protein is Enolase.